A 455-amino-acid chain; its full sequence is Glutamate-1-semialdehyde 2,1-aminomutase (455 aa).

Lys-286 is subject to N6-(pyridoxal phosphate)lysine.

Belongs to the class-III pyridoxal-phosphate-dependent aminotransferase family. HemL subfamily. Homodimer. Pyridoxal 5'-phosphate is required as a cofactor.

It localises to the cytoplasm. It catalyses the reaction (S)-4-amino-5-oxopentanoate = 5-aminolevulinate. It participates in porphyrin-containing compound metabolism; protoporphyrin-IX biosynthesis; 5-aminolevulinate from L-glutamyl-tRNA(Glu): step 2/2. The chain is Glutamate-1-semialdehyde 2,1-aminomutase from Clavibacter michiganensis subsp. michiganensis (strain NCPPB 382).